The chain runs to 101 residues: C-X-C motif chemokine 3 (101 aa).

An N-terminal signal peptide occupies residues 1–32 (MAPPTRRLLNAALLLLLLLMATSHQPSGTVVA). Intrachain disulfides connect Cys37–Cys63 and Cys39–Cys79.

Belongs to the intercrine alpha (chemokine CxC) family.

Its subcellular location is the secreted. Its function is as follows. Ligand for CXCR2. Has chemotactic activity for neutrophils. May play a role in inflammation and exert its effects on endothelial cells in an autocrine fashion. In Rattus norvegicus (Rat), this protein is C-X-C motif chemokine 3 (Cxcl3).